We begin with the raw amino-acid sequence, 444 residues long: tRNA modification GTPase MnmE (444 aa).

(6S)-5-formyl-5,6,7,8-tetrahydrofolate contacts are provided by Arg-22, Glu-79, and Arg-118. The TrmE-type G domain maps to 214 to 368 (GMQVVLAGPP…LRDHLKSVMG (155 aa)). Asn-224 provides a ligand contact to K(+). Residues 224–229 (NAGKSS), 243–249 (TEVPGTT), and 268–271 (DTAG) contribute to the GTP site. Ser-228 contacts Mg(2+). The K(+) site is built by Thr-243, Val-245, and Thr-248. Thr-249 is a binding site for Mg(2+). A (6S)-5-formyl-5,6,7,8-tetrahydrofolate-binding site is contributed by Lys-444.

This sequence belongs to the TRAFAC class TrmE-Era-EngA-EngB-Septin-like GTPase superfamily. TrmE GTPase family. Homodimer. Heterotetramer of two MnmE and two MnmG subunits. K(+) serves as cofactor.

The protein resides in the cytoplasm. Its function is as follows. Exhibits a very high intrinsic GTPase hydrolysis rate. Involved in the addition of a carboxymethylaminomethyl (cmnm) group at the wobble position (U34) of certain tRNAs, forming tRNA-cmnm(5)s(2)U34. This Alkalilimnicola ehrlichii (strain ATCC BAA-1101 / DSM 17681 / MLHE-1) protein is tRNA modification GTPase MnmE.